A 200-amino-acid chain; its full sequence is Protein GrpE (200 aa).

Composition is skewed to acidic residues over residues 1–17 (MNEQ…EQFD) and 34–44 (AFAEAGEETRD). A disordered region spans residues 1 to 49 (MNEQPNEELQSEDEQFDPQETVSFEGETAANDEAFAEAGEETRDEEMTR).

The protein belongs to the GrpE family. Homodimer.

Its subcellular location is the cytoplasm. Its function is as follows. Participates actively in the response to hyperosmotic and heat shock by preventing the aggregation of stress-denatured proteins, in association with DnaK and GrpE. It is the nucleotide exchange factor for DnaK and may function as a thermosensor. Unfolded proteins bind initially to DnaJ; upon interaction with the DnaJ-bound protein, DnaK hydrolyzes its bound ATP, resulting in the formation of a stable complex. GrpE releases ADP from DnaK; ATP binding to DnaK triggers the release of the substrate protein, thus completing the reaction cycle. Several rounds of ATP-dependent interactions between DnaJ, DnaK and GrpE are required for fully efficient folding. This chain is Protein GrpE, found in Rhodopirellula baltica (strain DSM 10527 / NCIMB 13988 / SH1).